The chain runs to 777 residues: MTAISSAPFSADEIAGEGIKPEEYDAIVERLGRHPNKAELGMFGVMWSEHCCYKNSRPLLSQFPTEGLRILVGPGENAGVVDLGDGLHLAFKVESHNHPSAVEPFQGAATGVGGILRDIFTMGARPIAILNSLRFGDLEQPRTRRLFHGVVSGISHYGNCVGVPTVGGEVAFDPAYNGNPLVNAMALGLMETDEIVKAGASGIGNPVLYVGSTTGRDGMGGASFASAELSDESLDDRPAVQVGDPFLEKSLIEACLEAFKTGAVVAAQDMGAAGLTCSTAEMAAKGGVGVELDLDLIPVRESGMVPYEYLLSESQERMLFVAAAGREQELIDIFHRWGLQAVVAGKIIAEPIVRIFWQGAIAAEIPATALSDNTPIYHRQLPDEPPAYAQQAWQWTIDQLPAATEVGCGDRSWNDLLLTLLDSPTIASKRWVYRQYDHQVQNNTVVLPGAADAAVVRLRPQMGAAALKTSNKGVAATTDCNARYCYLQPYEGAKAAVAEAARNLSCVGAEPLAVTDNLNFGSPEKPIGYWQLAEACRGLSEACREFSTPVTGGNVSLYNETLDSDGKPQPIYPTPVVGMVGLVPNLDRVCGQGFQSVGDRLYLLGLPTQAADDRLSLGGSEYLAIAHQTVAGLPPRIDFDLERRVQAVCRLGIHQGWIRSAHDSAEGGLAVAIAESAIAGSLGARVNLGELVGHRPDWLLFAEGGARILVSVDPAHVAVWEAELQAQIPAAWQAIGTVTEADAGLAIAAGNQPLVQLSVDQLQQTWGGAIERRLAKD.

H50 is an active-site residue. Y53 and K92 together coordinate ATP. E94 provides a ligand contact to Mg(2+). Substrate contacts are provided by residues 95-98 (SHNH) and R117. The Proton acceptor role is filled by H96. D118 lines the Mg(2+) pocket. Q241 serves as a coordination point for substrate. Residue D269 participates in Mg(2+) binding. 313–315 (ESQ) is a substrate binding site. The ATP site is built by D516 and G553. N554 is a binding site for Mg(2+). S556 is a substrate binding site.

It belongs to the FGAMS family. As to quaternary structure, monomer. Part of the FGAM synthase complex composed of 1 PurL, 1 PurQ and 2 PurS subunits.

It localises to the cytoplasm. The catalysed reaction is N(2)-formyl-N(1)-(5-phospho-beta-D-ribosyl)glycinamide + L-glutamine + ATP + H2O = 2-formamido-N(1)-(5-O-phospho-beta-D-ribosyl)acetamidine + L-glutamate + ADP + phosphate + H(+). It functions in the pathway purine metabolism; IMP biosynthesis via de novo pathway; 5-amino-1-(5-phospho-D-ribosyl)imidazole from N(2)-formyl-N(1)-(5-phospho-D-ribosyl)glycinamide: step 1/2. Functionally, part of the phosphoribosylformylglycinamidine synthase complex involved in the purines biosynthetic pathway. Catalyzes the ATP-dependent conversion of formylglycinamide ribonucleotide (FGAR) and glutamine to yield formylglycinamidine ribonucleotide (FGAM) and glutamate. The FGAM synthase complex is composed of three subunits. PurQ produces an ammonia molecule by converting glutamine to glutamate. PurL transfers the ammonia molecule to FGAR to form FGAM in an ATP-dependent manner. PurS interacts with PurQ and PurL and is thought to assist in the transfer of the ammonia molecule from PurQ to PurL. The polypeptide is Phosphoribosylformylglycinamidine synthase subunit PurL (Synechococcus elongatus (strain ATCC 33912 / PCC 7942 / FACHB-805) (Anacystis nidulans R2)).